The sequence spans 866 residues: Probable outer membrane usher protein ElfC (866 aa).

The signal sequence occupies residues 1 to 35 (MYRTHRQHSLLSSGGVPSFIGGLVVFVSAAFNAQA).

It belongs to the fimbrial export usher family.

It localises to the cell outer membrane. Functionally, part of the elfADCG fimbrial operon, which could be required for adherence to host epithelial cells. Could be involved in the export and assembly of the ElfA fimbrial subunits across the outer membrane. The sequence is that of Probable outer membrane usher protein ElfC (elfC) from Escherichia coli O157:H7.